A 590-amino-acid polypeptide reads, in one-letter code: KNR4/SMI1 homolog 2 (590 aa).

3 disordered regions span residues 59–97 (SSSH…SNTN), 216–239 (FQHQ…ETHG), and 407–590 (TPQR…DVAL). A compositionally biased stretch (polar residues) spans 71 to 85 (GSRTSLSRNGSSTTV). The segment covering 217 to 226 (QHQQQQQQHQ) has biased composition (low complexity). A compositionally biased stretch (polar residues) spans 430 to 454 (PSMSGATANTNKSQNPLINMESSSK). Basic and acidic residues-rich tracts occupy residues 470-481 (PEEPVKKSEVKS) and 489-515 (EPEK…AKED). The segment covering 516–528 (DKEEEEEEQEEEK) has biased composition (acidic residues). Residues 554-568 (TQKKNQSKKAKKQQQ) show a composition bias toward basic residues. The span at 576–590 (NDVEEVAEDLNDVAL) shows a compositional bias: acidic residues.

It belongs to the KNR4/SMI1 family.

The chain is KNR4/SMI1 homolog 2 from Debaryomyces hansenii (strain ATCC 36239 / CBS 767 / BCRC 21394 / JCM 1990 / NBRC 0083 / IGC 2968) (Yeast).